Reading from the N-terminus, the 507-residue chain is ATP synthase subunit alpha, chloroplastic (507 aa).

Residue 170–177 (GDRQTGKT) participates in ATP binding.

The protein belongs to the ATPase alpha/beta chains family. In terms of assembly, F-type ATPases have 2 components, CF(1) - the catalytic core - and CF(0) - the membrane proton channel. CF(1) has five subunits: alpha(3), beta(3), gamma(1), delta(1), epsilon(1). CF(0) has four main subunits: a, b, b' and c.

The protein resides in the plastid. The protein localises to the chloroplast thylakoid membrane. It catalyses the reaction ATP + H2O + 4 H(+)(in) = ADP + phosphate + 5 H(+)(out). Produces ATP from ADP in the presence of a proton gradient across the membrane. The alpha chain is a regulatory subunit. This Manihot esculenta (Cassava) protein is ATP synthase subunit alpha, chloroplastic.